Here is a 501-residue protein sequence, read N- to C-terminus: Cytoplasmic tRNA 2-thiolation protein 2 (501 aa).

Positions 1 to 12 (MCEMSEEYRESA) are enriched in basic and acidic residues. 2 disordered regions span residues 1 to 23 (MCEMSEEYRESAPKGPPPPRLGT) and 192 to 214 (GVERQSQHCAQDPQSPTGPPTTA). Cys2 carries the post-translational modification N-acetylcysteine. The residue at position 492 (Ser492) is a Phosphoserine.

Belongs to the CTU2/NCS2 family. Component of a complex at least composed of URM1, CTU2/NCS2 and CTU1/ATPBD3.

Its subcellular location is the cytoplasm. It functions in the pathway tRNA modification; 5-methoxycarbonylmethyl-2-thiouridine-tRNA biosynthesis. Functionally, plays a central role in 2-thiolation of mcm(5)S(2)U at tRNA wobble positions of tRNA(Lys), tRNA(Glu) and tRNA(Gln). May act by forming a heterodimer with CTU1/ATPBD3 that ligates sulfur from thiocarboxylated URM1 onto the uridine of tRNAs at wobble position. The chain is Cytoplasmic tRNA 2-thiolation protein 2 from Bos taurus (Bovine).